A 288-amino-acid polypeptide reads, in one-letter code: Polyamine aminopropyltransferase (288 aa).

The PABS domain maps to 9–238; it reads ETLHDQFGQY…GIMTFAWATD (230 aa). Residue glutamine 33 participates in S-methyl-5'-thioadenosine binding. Spermidine-binding residues include histidine 64 and aspartate 88. Residues glutamate 108 and 140 to 141 each bind S-methyl-5'-thioadenosine; that span reads DG. The active-site Proton acceptor is aspartate 158. 158 to 161 provides a ligand contact to spermidine; the sequence is DCTD. Proline 165 contacts S-methyl-5'-thioadenosine.

The protein belongs to the spermidine/spermine synthase family. In terms of assembly, homodimer or homotetramer.

The protein localises to the cytoplasm. It catalyses the reaction S-adenosyl 3-(methylsulfanyl)propylamine + putrescine = S-methyl-5'-thioadenosine + spermidine + H(+). Its pathway is amine and polyamine biosynthesis; spermidine biosynthesis; spermidine from putrescine: step 1/1. Its function is as follows. Catalyzes the irreversible transfer of a propylamine group from the amino donor S-adenosylmethioninamine (decarboxy-AdoMet) to putrescine (1,4-diaminobutane) to yield spermidine. The protein is Polyamine aminopropyltransferase of Escherichia coli (strain ATCC 8739 / DSM 1576 / NBRC 3972 / NCIMB 8545 / WDCM 00012 / Crooks).